We begin with the raw amino-acid sequence, 697 residues long: Protein arginine N-methyltransferase 7 (697 aa).

SAM-dependent MTase PRMT-type domains lie at 14–357 (QNTW…YSLW) and 366–697 (EQPA…EETK).

Belongs to the class I-like SAM-binding methyltransferase superfamily. Protein arginine N-methyltransferase family. PRMT7 subfamily.

In terms of biological role, essential arginine methyltransferase that can both catalyze the formation of omega-N monomethylarginine (MMA) and symmetrical dimethylarginine (sDMA). Specifically mediates the symmetrical dimethylation of arginine residues in the small nuclear ribonucleoproteins SmD1 and SmD3. This Drosophila virilis (Fruit fly) protein is Protein arginine N-methyltransferase 7 (Art7).